A 390-amino-acid chain; its full sequence is Probable NADH-dependent butanol dehydrogenase 2 (390 aa).

Belongs to the iron-containing alcohol dehydrogenase family.

Its pathway is alcohol metabolism; butanol biosynthesis. This chain is Probable NADH-dependent butanol dehydrogenase 2 (yugK), found in Bacillus subtilis (strain 168).